A 927-amino-acid chain; its full sequence is Disks large homolog 1 (927 aa).

In terms of domain architecture, L27 spans 4 to 64 (RKQDTQRALH…FYEVTLLDNP (61 aa)). Thr-115 bears the Phosphothreonine mark. A phosphoserine mark is found at Ser-122, Ser-138, and Ser-158. Residues 162–212 (PTEAVPPSSPTVPVIPVLPVPAENTVILPTIPQANPPPVLVNTDSLETSTY) are interaction with SH3 domains. Residues 224 to 546 (EITLERGNSG…QAVTIVAQYR (323 aa)) are required for interaction with MARCHF2. PDZ domains lie at 230 to 317 (GNSG…SEKI), 325 to 412 (GPKG…YMND), and 474 to 555 (TGLG…RFEA). Position 232 is a phosphoserine (Ser-232). The residue at position 399 (Tyr-399) is a Phosphotyrosine. Ser-568, Ser-573, Ser-575, Ser-579, Ser-598, Ser-619, Ser-707, Ser-710, and Ser-857 each carry phosphoserine. Residues 581–651 (KRSLYVRALF…PSKRRVEKKE (71 aa)) enclose the SH3 domain. Residues 683–858 (RKFPFYKNKD…ISIFIKPKSM (176 aa)) form the Guanylate kinase-like domain. The tract at residues 691 to 719 (KDQSEQETSDADQHITSNASDSESSYRGQ) is disordered. Residues 704-717 (HITSNASDSESSYR) show a composition bias toward polar residues.

Belongs to the MAGUK family. In terms of assembly, homotetramer. Interacts (via guanylate kinase-like domain) with DLGAP1, DLGAP2, DLGAP3, DLGAP4 and MAP1A. Interacts (via guanylate kinase-like domain) with KIF13B. May interact with HTR2A. Interacts (via PDZ domains) with GRIA1. Interacts (via PDZ domains) with GRIN2A. Interacts (via PDZ domains) with KCND2 and KCND3. Interacts (via PDZ domains) with KCNA1, KCNA2, KCNA3 and KCNA4. Interacts (via PDZ domains) with ADGRA3. Interacts with KCNF1. Interacts with CAMK2. Interacts with cytoskeleton-associated protein EPB41. Interacts with cytoskeleton-associated protein EZR. Found in a complex with KCNA5 and CAV3. Found in a complex with APC and CTNNB1. Interacts (via PDZ domains) with APC. Interacts with CDH1 through binding to PIK3R1. Forms multiprotein complexes with CASK, LIN7A, LIN7B, LIN7C, APBA1, and KCNJ12. Interacts with TOPK. Forms a tripartite complex composed of DLG1, MPP7 and LIN7 (LIN7A or LIN7C). May interact with TJAP1. Interacts with PTEN. Interacts with FRMPD4 (via C-terminus). Interacts with LRFN1, LRFN2 and LRFN4. Interacts with SFPQ. Interacts (via PDZ domains) with ADGRA2 (via PDZ-binding motif). Interacts with ADAM10; this interaction recruits ADAM10 to the cell membrane during long-term depression in hippocampal neurons. Interacts with DGKI (via PDZ-binding motif). Interacts (via PDZ domains) with MARCHF2 (via PDZ domain); the interaction leads to DLG1 ubiqtuitination and degradation. Interacts (via N-terminus) with MPP3; this interaction connects CADM1 with DLG1 and links CADM1 with the regulatory subunit of phosphoinositide-3-kinase (PI3K) by forming a multiprotein complex and participates in cell spreading. Phosphorylated by MAPK12. Phosphorylation of Ser-232 regulates association with GRIN2A. Post-translationally, ubiquitinated; by MARCHF2 which results in its degradation.

Its subcellular location is the cell membrane. It is found in the basolateral cell membrane. The protein localises to the endoplasmic reticulum membrane. It localises to the postsynaptic density. The protein resides in the synapse. Its subcellular location is the sarcolemma. It is found in the apical cell membrane. The protein localises to the cell junction. It localises to the cytoplasm. In terms of biological role, essential multidomain scaffolding protein required for normal development. Recruits channels, receptors and signaling molecules to discrete plasma membrane domains in polarized cells. Promotes epithelial cell layer barrier function via maintaining cell-cell adhesion. May also play a role in adherens junction assembly, signal transduction, cell proliferation, synaptogenesis and lymphocyte activation. Regulates the excitability of cardiac myocytes by modulating the functional expression of Kv4 channels. Functional regulator of Kv1.5 channel. During long-term depression in hippocampal neurons, it recruits ADAM10 to the plasma membrane. The protein is Disks large homolog 1 (DLG1) of Canis lupus familiaris (Dog).